Reading from the N-terminus, the 640-residue chain is MALSRGLPRELAEAVAGGRVLVVGAGGIGCELLKNLVLTGFSHIDLIDLDTIDVSNLNRQFLFQKKHVGRSKAQVAKESVLQFYPKANIVAYHDSIMNPDYNVEFFRQFILVMNALDNRAARNHVNRMCLAADVPLIESGTAGYLGQVTTIKKGVTECYECHPKPTQRTFPGCTIRNTPSEPIHCIVWAKYLFNQLFGEEDADQEVSPDRADPEAAWEPTEAEARARASNEDGDIKRISTKEWAKSTGYDPVKLFTKLFKDDIRYLLTMDKLWRKRKPPVPLDWAEVQSQGEETNASDQQNEPQLGLKDQQVLDVKSYARLFSKSIETLRVHLAEKGDGAELIWDKDDPSAMDFVTSAANLRMHIFSMNMKSRFDIKSMAGNIIPAIATTNAVIAGLIVLEGLKILSGKIDQCRTIFLNKQPNPRKKLLVPCALDPPNPNCYVCASKPEVTVRLNVHKVTVLTLQDKIVKEKFAMVAPDVQIEDGKGTILISSEEGETEANNHKKLSEFGIRNGSRLQADDFLQDYTLLINILHSEDLGKDVEFEVVGDAPEKVGPKQAEDAAKSITNGSDDGAQPSTSTAQEQDDVLIVDSDEEDSSNNADVSEEERSRKRKLDEKENLSAKRSRIEQKEELDDVIALD.

ATP contacts are provided by residues 24 to 29, D48, 56 to 59, K72, 95 to 96, and 117 to 122; these read GAGGIG, NLNR, SI, and DNRAAR. Zn(2+) is bound by residues C158 and C161. Residue K164 forms a Glycyl lysine isopeptide (Lys-Gly) (interchain with G-Cter in SUMO1) linkage. C173 acts as the Glycyl thioester intermediate in catalysis. K190 is covalently cross-linked (Glycyl lysine isopeptide (Lys-Gly) (interchain with G-Cter in SUMO)). The segment at 202-231 is disordered; that stretch reads ADQEVSPDRADPEAAWEPTEAEARARASNE. Phosphoserine is present on S207. Residues 222–231 are compositionally biased toward basic and acidic residues; that stretch reads AEARARASNE. K236 is covalently cross-linked (Glycyl lysine isopeptide (Lys-Gly) (interchain with G-Cter in SUMO1); alternate). Residues K236 and K257 each participate in a glycyl lysine isopeptide (Lys-Gly) (interchain with G-Cter in SUMO2); alternate cross-link. Residues K257 and K271 each participate in a glycyl lysine isopeptide (Lys-Gly) (interchain with G-Cter in SUMO); alternate cross-link. The residue at position 271 (K271) is an N6-acetyllysine; alternate. K275 participates in a covalent cross-link: Glycyl lysine isopeptide (Lys-Gly) (interchain with G-Cter in SUMO). K371 is covalently cross-linked (Glycyl lysine isopeptide (Lys-Gly) (interchain with G-Cter in SUMO2)). K420 is covalently cross-linked (Glycyl lysine isopeptide (Lys-Gly) (interchain with G-Cter in SUMO1); alternate). K420 is covalently cross-linked (Glycyl lysine isopeptide (Lys-Gly) (interchain with G-Cter in SUMO2); alternate). Zn(2+) contacts are provided by C441 and C444. Phosphoserine is present on S507. A Glycyl lysine isopeptide (Lys-Gly) (interchain with G-Cter in SUMO2) cross-link involves residue K540. The segment covering 551-563 has biased composition (basic and acidic residues); the sequence is PEKVGPKQAEDAA. The tract at residues 551–640 is disordered; that stretch reads PEKVGPKQAE…EELDDVIALD (90 aa). Residues 565 to 582 are compositionally biased toward polar residues; the sequence is SITNGSDDGAQPSTSTAQ. Acidic residues predominate over residues 583–597; sequence EQDDVLIVDSDEEDS. S592 is subject to Phosphoserine. Basic and acidic residues predominate over residues 606 to 630; that stretch reads EERSRKRKLDEKENLSAKRSRIEQK. A Glycyl lysine isopeptide (Lys-Gly) (interchain with G-Cter in SUMO) cross-link involves residue K611. K613 participates in a covalent cross-link: Glycyl lysine isopeptide (Lys-Gly) (interchain with G-Cter in SUMO); alternate. K613 is subject to N6-acetyllysine; alternate. Residues K617 and K623 each participate in a glycyl lysine isopeptide (Lys-Gly) (interchain with G-Cter in SUMO) cross-link. Acidic residues predominate over residues 631–640; it reads EELDDVIALD.

Belongs to the ubiquitin-activating E1 family. As to quaternary structure, heterodimer of SAE1 and UBA2/SAE2. The heterodimer corresponds to the two domains that are encoded on a single polypeptide chain in ubiquitin-activating enzyme E1. Interacts with UBE2I. Post-translationally, sumoylated with SUMO1 and SUMO2/3 and by UBC9. Sumoylation at Lys-236 inhibits enzymatic activity. Sumoylation at the C-terminal lysine cluster plays an essential role in nuclear trafficking.

The protein localises to the cytoplasm. It localises to the nucleus. It participates in protein modification; protein sumoylation. Its function is as follows. The heterodimer acts as an E1 ligase for SUMO1, SUMO2, SUMO3, and probably SUMO4. It mediates ATP-dependent activation of SUMO proteins followed by formation of a thioester bond between a SUMO protein and a conserved active site cysteine residue on UBA2/SAE2. This Homo sapiens (Human) protein is SUMO-activating enzyme subunit 2 (UBA2).